Reading from the N-terminus, the 500-residue chain is Lysine--tRNA ligase (500 aa).

Residues Glu-411 and Glu-418 each coordinate Mg(2+).

The protein belongs to the class-II aminoacyl-tRNA synthetase family. In terms of assembly, homodimer. It depends on Mg(2+) as a cofactor.

Its subcellular location is the cytoplasm. It catalyses the reaction tRNA(Lys) + L-lysine + ATP = L-lysyl-tRNA(Lys) + AMP + diphosphate. In Actinobacillus pleuropneumoniae serotype 7 (strain AP76), this protein is Lysine--tRNA ligase.